The sequence spans 150 residues: Cytochrome c oxidase subunit 5A, mitochondrial (150 aa).

Residues Met-1–Tyr-41 constitute a mitochondrion transit peptide. The SIFI-degron motif lies at Leu-2–Ala-17. An N6-acetyllysine mark is found at Lys-87 and Lys-113. Thr-141 is subject to Phosphothreonine.

Belongs to the cytochrome c oxidase subunit 5A family. In terms of assembly, component of the cytochrome c oxidase (complex IV, CIV), a multisubunit enzyme composed of 14 subunits. The complex is composed of a catalytic core of 3 subunits MT-CO1, MT-CO2 and MT-CO3, encoded in the mitochondrial DNA, and 11 supernumerary subunits COX4I, COX5A, COX5B, COX6A, COX6B, COX6C, COX7A, COX7B, COX7C, COX8 and NDUFA4, which are encoded in the nuclear genome. The complex exists as a monomer or a dimer and forms supercomplexes (SCs) in the inner mitochondrial membrane with NADH-ubiquinone oxidoreductase (complex I, CI) and ubiquinol-cytochrome c oxidoreductase (cytochrome b-c1 complex, complex III, CIII), resulting in different assemblies (supercomplex SCI(1)III(2)IV(1) and megacomplex MCI(2)III(2)IV(2)). Interacts with AFG1L. Interacts with RAB5IF. In response to mitochondrial stress, the precursor protein is ubiquitinated by the SIFI complex in the cytoplasm before mitochondrial import, leading to its degradation. Within the SIFI complex, UBR4 initiates ubiquitin chain that are further elongated or branched by KCMF1.

It localises to the mitochondrion inner membrane. Its pathway is energy metabolism; oxidative phosphorylation. Component of the cytochrome c oxidase, the last enzyme in the mitochondrial electron transport chain which drives oxidative phosphorylation. The respiratory chain contains 3 multisubunit complexes succinate dehydrogenase (complex II, CII), ubiquinol-cytochrome c oxidoreductase (cytochrome b-c1 complex, complex III, CIII) and cytochrome c oxidase (complex IV, CIV), that cooperate to transfer electrons derived from NADH and succinate to molecular oxygen, creating an electrochemical gradient over the inner membrane that drives transmembrane transport and the ATP synthase. Cytochrome c oxidase is the component of the respiratory chain that catalyzes the reduction of oxygen to water. Electrons originating from reduced cytochrome c in the intermembrane space (IMS) are transferred via the dinuclear copper A center (CU(A)) of subunit 2 and heme A of subunit 1 to the active site in subunit 1, a binuclear center (BNC) formed by heme A3 and copper B (CU(B)). The BNC reduces molecular oxygen to 2 water molecules using 4 electrons from cytochrome c in the IMS and 4 protons from the mitochondrial matrix. This is Cytochrome c oxidase subunit 5A, mitochondrial (COX5A) from Colobus guereza (Mantled guereza).